We begin with the raw amino-acid sequence, 577 residues long: Glucose-6-phosphate 1-dehydrogenase, chloroplastic (577 aa).

The disordered stretch occupies residues 1–20; it reads MGVQLRLNPCSSSSAATSPS. A chloroplast-targeting transit peptide spans 1-63; it reads MGVQLRLNPC…QPRKHFEVFS (63 aa). Positions 11–20 are enriched in low complexity; that stretch reads SSSSAATSPS. NADP(+) contacts are provided by residues 97-104 and arginine 131; that span reads GASGDLAK. Cysteine 149 and cysteine 157 form a disulfide bridge. Lysine 234 lines the NADP(+) pocket. D-glucose 6-phosphate-binding positions include lysine 234, 264–268, glutamate 302, and aspartate 321; that span reads HYLGK. The active-site Proton acceptor is the histidine 326. Lysine 419 contributes to the NADP(+) binding site. D-glucose 6-phosphate-binding residues include lysine 422 and lysine 427. Positions 428, 432, and 461 each coordinate NADP(+). Glutamine 463 serves as a coordination point for D-glucose 6-phosphate. Residues 469–471 and arginine 554 contribute to the NADP(+) site; that span reads YLK.

The protein belongs to the glucose-6-phosphate dehydrogenase family. As to quaternary structure, homodimer. In terms of tissue distribution, green tissues, leaves and chloroplasts.

It localises to the plastid. The protein resides in the chloroplast. The catalysed reaction is D-glucose 6-phosphate + NADP(+) = 6-phospho-D-glucono-1,5-lactone + NADPH + H(+). Its pathway is carbohydrate degradation; pentose phosphate pathway; D-ribulose 5-phosphate from D-glucose 6-phosphate (oxidative stage): step 1/3. With respect to regulation, regulated by metabolites. Post-translationally inactivated by cysteine-mediated redox modification via the ferredoxin-thioredoxin system in the light and this avoids futile cycles with photosynthetic CO2 fixation. Its function is as follows. Catalyzes the rate-limiting step of the oxidative pentose-phosphate pathway, which represents a route for the dissimilation of carbohydrates besides glycolysis. The main function of this enzyme is to provide reducing power (NADPH) and pentose phosphates for fatty acid and nucleic acid synthesis which are involved in membrane synthesis and cell division. This is Glucose-6-phosphate 1-dehydrogenase, chloroplastic from Solanum tuberosum (Potato).